Consider the following 214-residue polypeptide: Outer-membrane lipoprotein carrier protein (214 aa).

The first 24 residues, 1–24 (MKIKLAFAVLLALCLSLSVMPVLA), serve as a signal peptide directing secretion.

Belongs to the LolA family. Monomer.

Its subcellular location is the periplasm. Functionally, participates in the translocation of lipoproteins from the inner membrane to the outer membrane. Only forms a complex with a lipoprotein if the residue after the N-terminal Cys is not an aspartate (The Asp acts as a targeting signal to indicate that the lipoprotein should stay in the inner membrane). In Alkalilimnicola ehrlichii (strain ATCC BAA-1101 / DSM 17681 / MLHE-1), this protein is Outer-membrane lipoprotein carrier protein.